A 311-amino-acid chain; its full sequence is Pyrimidine-specific ribonucleoside hydrolase RihA (311 aa).

The active site involves H240.

Belongs to the IUNH family. RihA subfamily.

Its function is as follows. Hydrolyzes cytidine or uridine to ribose and cytosine or uracil, respectively. The polypeptide is Pyrimidine-specific ribonucleoside hydrolase RihA (Salmonella typhimurium (strain LT2 / SGSC1412 / ATCC 700720)).